The following is a 554-amino-acid chain: Glutamine--tRNA ligase (554 aa).

The short motif at 34–44 is the 'HIGH' region element; the sequence is PEPNGYLHIGH. ATP is bound by residues 35–37 and 41–47; these read EPN and HIGHAKS. L-glutamine-binding residues include Asp-67 and Tyr-212. ATP contacts are provided by residues Thr-231, 261–262, and 269–271; these read RL and MSK. The short motif at 268–272 is the 'KMSKS' region element; that stretch reads VMSKR. The interval 317 to 324 is interaction with tRNA; that stretch reads TKQDNTIE.

Belongs to the class-I aminoacyl-tRNA synthetase family. As to quaternary structure, monomer.

Its subcellular location is the cytoplasm. The enzyme catalyses tRNA(Gln) + L-glutamine + ATP = L-glutaminyl-tRNA(Gln) + AMP + diphosphate. The polypeptide is Glutamine--tRNA ligase (Shigella dysenteriae serotype 1 (strain Sd197)).